A 271-amino-acid chain; its full sequence is Shikimate dehydrogenase (NADP(+)) (271 aa).

Shikimate is bound by residues 14-16 and Thr-61; that span reads SLS. The active-site Proton acceptor is the Lys-65. Shikimate-binding residues include Asn-86 and Asp-101. NADP(+) is bound by residues 125–129 and Ile-212; that span reads GAGGA. Tyr-214 provides a ligand contact to shikimate. Residue Gly-235 participates in NADP(+) binding.

It belongs to the shikimate dehydrogenase family. As to quaternary structure, homodimer.

The enzyme catalyses shikimate + NADP(+) = 3-dehydroshikimate + NADPH + H(+). It functions in the pathway metabolic intermediate biosynthesis; chorismate biosynthesis; chorismate from D-erythrose 4-phosphate and phosphoenolpyruvate: step 4/7. In terms of biological role, involved in the biosynthesis of the chorismate, which leads to the biosynthesis of aromatic amino acids. Catalyzes the reversible NADPH linked reduction of 3-dehydroshikimate (DHSA) to yield shikimate (SA). This is Shikimate dehydrogenase (NADP(+)) from Clostridium perfringens (strain SM101 / Type A).